The sequence spans 226 residues: LexA repressor (226 aa).

Residues 28-48 (RAEICQSLGFRSPNAAESHLR) constitute a DNA-binding region (H-T-H motif). Catalysis depends on for autocatalytic cleavage activity residues serine 133 and lysine 170.

It belongs to the peptidase S24 family. Homodimer.

The catalysed reaction is Hydrolysis of Ala-|-Gly bond in repressor LexA.. Represses a number of genes involved in the response to DNA damage (SOS response), including recA and lexA. In the presence of single-stranded DNA, RecA interacts with LexA causing an autocatalytic cleavage which disrupts the DNA-binding part of LexA, leading to derepression of the SOS regulon and eventually DNA repair. This Halorhodospira halophila (strain DSM 244 / SL1) (Ectothiorhodospira halophila (strain DSM 244 / SL1)) protein is LexA repressor.